Consider the following 429-residue polypeptide: MATAVRAVGCLPVLCSGTAGHLLRRQHSLNTLPAASILAWKSVLSNGHLSSLGTRDTHPYASLSRALQTQCCISSPSHLMSQQYRPYSFFTKLTADELWKGALAETGAGAKKGRGKRTKKKKRKDLNRGQIIGEGRYGFLWPGLNVPVMKNGTVQTIAQRSKEEQEKVEADVIQQREEWERKKKMKVKRERGWSGNSWGGLSLGPPDPGPSGETYEDFDTRILEVRNVFTMTAKEGRRKSIRVLVAVGNGKGAAGFAIGKATDRMDAFRKAKNRAVHHLYYIERYEDHTIFHDISLRFKRTHIKMKKQPKGYGLRCHRAIITICRLIGIKDMYAKVSGSTNMLSLTQGLFHGLSRQETHQQLADKKGLHVVEIREECGPLPIVVASPRGALRKDPEPDEVPDIKLDWEDVKTAQGMKRCVWSNLKRAAT.

The tract at residues Ala108–Asn127 is disordered. Over residues Lys111–Asp125 the composition is skewed to basic residues. The region spanning Phe218–Ile282 is the S5 DRBM domain.

The protein belongs to the universal ribosomal protein uS5 family. Component of the mitochondrial ribosome small subunit (28S) which comprises a 12S rRNA and about 30 distinct proteins.

The protein resides in the mitochondrion. The sequence is that of Small ribosomal subunit protein uS5m (MRPS5) from Pongo abelii (Sumatran orangutan).